A 329-amino-acid polypeptide reads, in one-letter code: Anthranilate phosphoribosyltransferase (329 aa).

5-phospho-alpha-D-ribose 1-diphosphate contacts are provided by residues Gly-78, 81–82 (GD), 88–91 (NLST), 106–114 (KHGNRAASS), and Ser-118. Residue Gly-78 coordinates anthranilate. Position 90 (Ser-90) interacts with Mg(2+). Position 109 (Asn-109) interacts with anthranilate. Arg-164 contributes to the anthranilate binding site. 2 residues coordinate Mg(2+): Asp-221 and Glu-222.

It belongs to the anthranilate phosphoribosyltransferase family. Homodimer. Mg(2+) is required as a cofactor.

The catalysed reaction is N-(5-phospho-beta-D-ribosyl)anthranilate + diphosphate = 5-phospho-alpha-D-ribose 1-diphosphate + anthranilate. It participates in amino-acid biosynthesis; L-tryptophan biosynthesis; L-tryptophan from chorismate: step 2/5. Catalyzes the transfer of the phosphoribosyl group of 5-phosphorylribose-1-pyrophosphate (PRPP) to anthranilate to yield N-(5'-phosphoribosyl)-anthranilate (PRA). In Thermus thermophilus (strain ATCC BAA-163 / DSM 7039 / HB27), this protein is Anthranilate phosphoribosyltransferase.